The following is a 300-amino-acid chain: ClpXP adapter protein SpxH (300 aa).

It belongs to the SpxH family. As to quaternary structure, interacts with Spx.

It is found in the cytoplasm. Its function is as follows. Adapter protein required for efficient degradation of Spx by ClpXP under non-stress conditions. Interaction with Spx stabilizes Spx and exposes the C-terminus of Spx for recognition and proteolysis by ClpXP. This chain is ClpXP adapter protein SpxH, found in Bacillus licheniformis (strain ATCC 14580 / DSM 13 / JCM 2505 / CCUG 7422 / NBRC 12200 / NCIMB 9375 / NCTC 10341 / NRRL NRS-1264 / Gibson 46).